The primary structure comprises 723 residues: Transient receptor potential cation channel subfamily V member 5 (723 aa).

Over 1–320 (MGAKTPWIQL…SLKWKKYGQP (320 aa)) the chain is Cytoplasmic. ANK repeat units follow at residues 38-68 (IWES…DFRQ), 72-101 (LGET…YLVT), 110-139 (VGQT…SASA), 156-185 (YGEH…DIRA), 189-222 (LGNT…GDHL), and 232-261 (QGLT…RIQW). The helical transmembrane segment at 321–341 (YFCLLGALYIFYMVCFTTCCV) threads the bilayer. Residues 342 to 378 (YRPLKFRDANRTHVRDNTIMEQKSLQEAYVTYQDKIR) lie on the Extracellular side of the membrane. Residues 379–401 (LVGELVTVIGAVIILLLEIPDIF) form a helical membrane-spanning segment. At 402–412 (RVGASRYFGQT) the chain is on the extracellular side. A helical transmembrane segment spans residues 413–435 (VLGGPFHVIIITYASLVLLTMAM). The Cytoplasmic portion of the chain corresponds to 436–441 (RLTNVN). A helical membrane pass occupies residues 442-462 (GEVVPMSMALVLGWCSVMYFA). The Extracellular segment spans residues 463–485 (RGFQMLGPFTIMIQKMIFGDLLR). A helical transmembrane segment spans residues 486–506 (FCWLMAMVILGFASAFYIIFQ). The pore-forming intramembrane region spans 517–537 (SDYPTAMFSTFELFLTIIDGP). Position 535 (aspartate 535) interacts with Ca(2+). The chain crosses the membrane as a helical span at residues 550 to 570 (VTYATFAIIATLLMLNLFIAM). Over 571 to 723 (MGDTHWRVAQ…EGDGEEIYQF (153 aa)) the chain is Cytoplasmic. The interaction with S100A10 stretch occupies residues 591–595 (VATTV). The involved in Ca(2+)-dependent inactivation stretch occupies residues 643–646 (AFKS). The segment at 651–673 (EVQEQLSEKQPSGTETGTLARGS) is disordered. The segment covering 654–667 (EQLSEKQPSGTETG) has biased composition (polar residues). Threonine 678 carries the post-translational modification Phosphothreonine. Position 682 is a phosphoserine (serine 682). Residues 693 to 723 (RGWEILRRNTLGHLNLGLDPGEGDGEEIYQF) form an involved in Ca(2+)-dependent inactivation region.

The protein belongs to the transient receptor (TC 1.A.4) family. TrpV subfamily. TRPV5 sub-subfamily. As to quaternary structure, homotetramer and probably heterotetramer with TRPV6. Interacts with TRPV6. Interacts with S100A10 and probably with the ANAX2-S100A10 heterotetramer. The interaction with S100A10 is required for the trafficking to the plasma membrane. Interacts with calmodulin. Interacts with BSPRY, which results in its inactivation. In terms of processing, glycosylated. In terms of tissue distribution, detected in kidney cortex (at protein level).

It is found in the apical cell membrane. The enzyme catalyses Ca(2+)(in) = Ca(2+)(out). With respect to regulation, activated by WNK3. In terms of biological role, constitutively active calcium selective cation channel thought to be involved in Ca(2+) reabsorption in kidney and intestine. Required for normal Ca(2+) reabsorption in the kidney distal convoluted tubules. The channel is activated by low internal calcium level and the current exhibits an inward rectification. A Ca(2+)-dependent feedback regulation includes fast channel inactivation and slow current decay. Heteromeric assembly with TRPV6 seems to modify channel properties. TRPV5-TRPV6 heteromultimeric concatemers exhibit voltage-dependent gating. The sequence is that of Transient receptor potential cation channel subfamily V member 5 (Trpv5) from Mus musculus (Mouse).